Here is a 938-residue protein sequence, read N- to C-terminus: Probable glutamyl endopeptidase, chloroplastic (938 aa).

A chloroplast-targeting transit peptide spans 1–54 (MSSLTILLQRACLRFALLPVPPLRAPLRPPRRPLGLPRRSAMSSSAASRLSHIV). The segment covering 58–76 (GGAAGESSEPPAAAAAASG) has biased composition (low complexity). The segment at 58–77 (GGAAGESSEPPAAAAAASGL) is disordered. Residues serine 762, aspartate 836, and histidine 870 each act as charge relay system in the active site. Residues 897–913 (SSKTDSDSVADTENKTV) are compositionally biased toward polar residues. Residues 897–938 (SSKTDSDSVADTENKTVSASGGGAPCEGPEAEGFSSMQRSLL) form a disordered region.

Belongs to the peptidase S9D family.

It is found in the plastid. The protein resides in the chloroplast stroma. Functionally, serine-type protease active in vitro against the LHCII N-terminal. Cleaves its substrate on the carboxy-side of Glu residues. The sequence is that of Probable glutamyl endopeptidase, chloroplastic (GEP) from Oryza sativa subsp. japonica (Rice).